We begin with the raw amino-acid sequence, 417 residues long: Frizzy aggregation protein FrzCD (417 aa).

Basic and acidic residues predominate over residues 1–11 (MSLDTPNEKPA). The segment at 1-34 (MSLDTPNEKPAGKARARKAPASKAGATNAASTSS) is disordered. Low complexity predominate over residues 21–34 (ASKAGATNAASTSS). Positions 144–380 (AALRLSSSAN…QVVASMAEIE (237 aa)) constitute a Methyl-accepting transducer domain.

Belongs to the methyl-accepting chemotaxis (MCP) protein family. Methylated. Saturated fatty acids capric acid and lauric acid stimulate methylation. Short-chain alcohols, such as isoamyl alcohol, and some other solvents cause demethylation.

It is found in the cytoplasm. Its function is as follows. Methyl-accepting taxis protein necessary for the proper aggregation of cells to form fruiting bodies. Frz genes define a system of signal transduction analogous to the enterobacterial chemotaxis systems. The polypeptide is Frizzy aggregation protein FrzCD (frzCD) (Myxococcus xanthus).